The chain runs to 229 residues: Large ribosomal subunit protein uL1 (229 aa).

This sequence belongs to the universal ribosomal protein uL1 family. In terms of assembly, part of the 50S ribosomal subunit.

In terms of biological role, binds directly to 23S rRNA. The L1 stalk is quite mobile in the ribosome, and is involved in E site tRNA release. Its function is as follows. Protein L1 is also a translational repressor protein, it controls the translation of the L11 operon by binding to its mRNA. The chain is Large ribosomal subunit protein uL1 from Histophilus somni (strain 129Pt) (Haemophilus somnus).